The primary structure comprises 344 residues: Arginine N-succinyltransferase (344 aa).

Leu125 contributes to the succinyl-CoA binding site. The active-site Proton donor is His229.

Belongs to the arginine N-succinyltransferase family.

It catalyses the reaction succinyl-CoA + L-arginine = N(2)-succinyl-L-arginine + CoA + H(+). The protein operates within amino-acid degradation; L-arginine degradation via AST pathway; L-glutamate and succinate from L-arginine: step 1/5. Catalyzes the transfer of succinyl-CoA to arginine to produce N(2)-succinylarginine. In Shigella dysenteriae serotype 1 (strain Sd197), this protein is Arginine N-succinyltransferase.